The sequence spans 321 residues: ATP-dependent 6-phosphofructokinase (321 aa).

ATP is bound at residue Gly-12. ADP contacts are provided by residues 22 to 26 (RAVVR) and 55 to 60 (RYSVSD). ATP is bound by residues 73–74 (RF) and 103–106 (GDGS). Mg(2+) is bound at residue Asp-104. Residue 127-129 (TID) coordinates substrate. Asp-129 acts as the Proton acceptor in catalysis. Arg-156 provides a ligand contact to ADP. Substrate contacts are provided by residues Arg-164 and 171 to 173 (MGR). ADP contacts are provided by residues 187-189 (GCE) and 215-217 (KRH). Substrate-binding positions include Glu-224, Arg-245, and 251–254 (HVQR).

This sequence belongs to the phosphofructokinase type A (PFKA) family. ATP-dependent PFK group I subfamily. Prokaryotic clade 'B1' sub-subfamily. As to quaternary structure, homotetramer. Mg(2+) serves as cofactor.

Its subcellular location is the cytoplasm. It carries out the reaction beta-D-fructose 6-phosphate + ATP = beta-D-fructose 1,6-bisphosphate + ADP + H(+). Its pathway is carbohydrate degradation; glycolysis; D-glyceraldehyde 3-phosphate and glycerone phosphate from D-glucose: step 3/4. With respect to regulation, allosterically activated by ADP and other diphosphonucleosides, and allosterically inhibited by phosphoenolpyruvate. In terms of biological role, catalyzes the phosphorylation of D-fructose 6-phosphate to fructose 1,6-bisphosphate by ATP, the first committing step of glycolysis. The sequence is that of ATP-dependent 6-phosphofructokinase from Actinobacillus succinogenes (strain ATCC 55618 / DSM 22257 / CCUG 43843 / 130Z).